Reading from the N-terminus, the 678-residue chain is Oviduct-specific glycoprotein (678 aa).

An N-terminal signal peptide occupies residues 1–21 (MWKLLLWVGLVLVLKHHDGAA). Residues 22–385 (HKLVCYFTNW…YVLNDILVRA (364 aa)) enclose the GH18 domain. Cys-26 and Cys-51 are oxidised to a cystine. Residues 71-72 (LQ), 98-101 (GGWN), Tyr-142, 211-214 (LSYD), and Trp-355 each bind chitin. N-linked (GlcNAc...) asparagine glycans are attached at residues Asn-402 and Asn-441. The tract at residues 524 to 544 (LTPVGHQSVTPVSHQSVSPGG) is disordered. Positions 528 to 544 (GHQSVTPVSHQSVSPGG) are enriched in polar residues. N-linked (GlcNAc...) asparagine glycans are attached at residues Asn-580, Asn-596, and Asn-648. Positions 581-606 (ISVTPEGQTMPLRGENLTSEVGTHPR) are disordered. The segment covering 651–662 (SVNSVTPQTSPL) has biased composition (polar residues). The disordered stretch occupies residues 651–678 (SVNSVTPQTSPLSLKKEIPENSAVDEEA).

It belongs to the glycosyl hydrolase 18 family. In terms of tissue distribution, oviduct.

It localises to the cytoplasmic vesicle. The protein resides in the secretory vesicle. In terms of biological role, binds to oocyte zona pellucida in vivo. May play a role in the fertilization process and/or early embryonic development. The sequence is that of Oviduct-specific glycoprotein (OVGP1) from Homo sapiens (Human).